We begin with the raw amino-acid sequence, 198 residues long: uncharacterized protein (198 aa).

2 disordered regions span residues 15-69 (RLGQ…KDTR) and 172-198 (FSVK…LWGL). Composition is skewed to basic and acidic residues over residues 37–49 (HKSF…DQSR) and 56–69 (FNEK…KDTR). Over residues 176–186 (ESSNLSNNDSD) the composition is skewed to low complexity. Residues 187–198 (ASLDEDTLLWGL) show a composition bias toward acidic residues.

Its subcellular location is the nucleus. This is an uncharacterized protein from Schizosaccharomyces pombe (strain 972 / ATCC 24843) (Fission yeast).